The following is a 359-amino-acid chain: Peptide chain release factor 1 (359 aa).

Gln236 carries the N5-methylglutamine modification.

This sequence belongs to the prokaryotic/mitochondrial release factor family. Post-translationally, methylated by PrmC. Methylation increases the termination efficiency of RF1.

It is found in the cytoplasm. Peptide chain release factor 1 directs the termination of translation in response to the peptide chain termination codons UAG and UAA. The protein is Peptide chain release factor 1 of Streptococcus agalactiae serotype V (strain ATCC BAA-611 / 2603 V/R).